Consider the following 499-residue polypeptide: Probable folate-biopterin transporter 2 (499 aa).

12 helical membrane passes run 43–63 (WSFV…GGSL), 92–112 (IPWI…IFGF), 116–136 (PYFI…SLHS), 141–161 (YLAL…DVTI), 185–205 (LSSS…VHLV), 209–229 (GVFG…IVFS), 266–286 (LYMY…FYWF), 302–322 (FILS…QLVL), 330–350 (LCLW…ILVF), 354–374 (LKFG…SQMI), 399–419 (FALL…LGGI), and 435–455 (WLAV…LFLV).

This sequence belongs to the major facilitator superfamily. Folate-biopterin transporter (TC 2.A.71) family.

Its subcellular location is the membrane. Could mediate folate transport. The chain is Probable folate-biopterin transporter 2 from Arabidopsis thaliana (Mouse-ear cress).